The primary structure comprises 315 residues: Probable HTH-type transcriptional regulator SinR (315 aa).

Positions 8-65 (RGMRDWMIFIKVAEVGNLSRAARELDISISAVSKSLSRLENSIEVTLLRRDSHHLELT) constitute an HTH lysR-type domain. A DNA-binding region (H-T-H motif) is located at residues 25 to 44 (LSRAARELDISISAVSKSLS).

It belongs to the LysR transcriptional regulatory family.

Its function is as follows. Probable regulatory protein. Its target is not known. The protein is Probable HTH-type transcriptional regulator SinR (sinR) of Salmonella typhimurium (strain LT2 / SGSC1412 / ATCC 700720).